Consider the following 74-residue polypeptide: ATP synthase subunit c (74 aa).

Helical transmembrane passes span 5-25 and 49-69; these read LAYIGAGLAGMGTGIAALGVG and LFIGIAFAEALGIFSFLVALL.

This sequence belongs to the ATPase C chain family. As to quaternary structure, F-type ATPases have 2 components, F(1) - the catalytic core - and F(0) - the membrane proton channel. F(1) has five subunits: alpha(3), beta(3), gamma(1), delta(1), epsilon(1). F(0) has three main subunits: a(1), b(2) and c(10-14). The alpha and beta chains form an alternating ring which encloses part of the gamma chain. F(1) is attached to F(0) by a central stalk formed by the gamma and epsilon chains, while a peripheral stalk is formed by the delta and b chains.

It is found in the cell inner membrane. In terms of biological role, f(1)F(0) ATP synthase produces ATP from ADP in the presence of a proton or sodium gradient. F-type ATPases consist of two structural domains, F(1) containing the extramembraneous catalytic core and F(0) containing the membrane proton channel, linked together by a central stalk and a peripheral stalk. During catalysis, ATP synthesis in the catalytic domain of F(1) is coupled via a rotary mechanism of the central stalk subunits to proton translocation. Key component of the F(0) channel; it plays a direct role in translocation across the membrane. A homomeric c-ring of between 10-14 subunits forms the central stalk rotor element with the F(1) delta and epsilon subunits. In Ruegeria sp. (strain TM1040) (Silicibacter sp.), this protein is ATP synthase subunit c.